A 129-amino-acid polypeptide reads, in one-letter code: Glycine cleavage system H protein (129 aa).

The region spanning 24–106 (SYTVGITEHA…YGDGWFFRIM (83 aa)) is the Lipoyl-binding domain. Lys65 is modified (N6-lipoyllysine).

The protein belongs to the GcvH family. In terms of assembly, the glycine cleavage system is composed of four proteins: P, T, L and H. Requires (R)-lipoate as cofactor.

The glycine cleavage system catalyzes the degradation of glycine. The H protein shuttles the methylamine group of glycine from the P protein to the T protein. The polypeptide is Glycine cleavage system H protein (Shewanella denitrificans (strain OS217 / ATCC BAA-1090 / DSM 15013)).